The sequence spans 120 residues: Large ribosomal subunit protein uL18 (120 aa).

The interval methionine 1–arginine 26 is disordered. A compositionally biased stretch (basic residues) spans serine 8 to glycine 18.

It belongs to the universal ribosomal protein uL18 family. As to quaternary structure, part of the 50S ribosomal subunit; part of the 5S rRNA/L5/L18/L25 subcomplex. Contacts the 5S and 23S rRNAs.

This is one of the proteins that bind and probably mediate the attachment of the 5S RNA into the large ribosomal subunit, where it forms part of the central protuberance. The chain is Large ribosomal subunit protein uL18 from Trichormus variabilis (strain ATCC 29413 / PCC 7937) (Anabaena variabilis).